The chain runs to 241 residues: ATP synthase subunit a (241 aa).

5 helical membrane passes run 30–50, 91–111, 128–148, 193–213, and 214–234; these read GQVF…VVVG, FIGT…LVPW, INTT…AGLS, LVVA…VMFL, and GLFT…YYIG.

This sequence belongs to the ATPase A chain family. F-type ATPases have 2 components, CF(1) - the catalytic core - and CF(0) - the membrane proton channel. CF(1) has five subunits: alpha(3), beta(3), gamma(1), delta(1), epsilon(1). CF(0) has four main subunits: a, b, b' and c.

It is found in the cellular thylakoid membrane. In terms of biological role, key component of the proton channel; it plays a direct role in the translocation of protons across the membrane. In Prochlorococcus marinus (strain MIT 9303), this protein is ATP synthase subunit a.